Here is a 152-residue protein sequence, read N- to C-terminus: UPF0225 protein YchJ (152 aa).

Belongs to the UPF0225 family.

The polypeptide is UPF0225 protein YchJ (Escherichia coli O81 (strain ED1a)).